The following is a 613-amino-acid chain: Glutaminase 1 (613 aa).

The interval 33-315 (GAVADYIPEL…LSSHYDLHML (283 aa)) is glutaminase. Residues Ser-75, Asn-124, Glu-168, Asn-175, Tyr-199, Tyr-251, and Val-269 each coordinate substrate. The 113-residue stretch at 345 to 457 (REILAAHEQE…LDTAIEWAED (113 aa)) folds into the STAS domain. 480–595 (LLEGLSADEL…ERIMRNLAQL (116 aa)) lines the a nucleoside 3',5'-cyclic phosphate pocket.

This sequence belongs to the glutaminase family. Homotetramer.

It carries out the reaction L-glutamine + H2O = L-glutamate + NH4(+). The sequence is that of Glutaminase 1 (glsA1) from Bradyrhizobium diazoefficiens (strain JCM 10833 / BCRC 13528 / IAM 13628 / NBRC 14792 / USDA 110).